The primary structure comprises 386 residues: MNEVVIVDCIRTPMGRSKAGVFRNVRAEALSAHLMKQILVRNPALNPEDIEDVIWGCVKQTKEQGFNIARNASLLAGLPKSIGGVTVNRLCGSSMEALHQASTSIMSGQGDVFLIGGVEHMGHVPMMYDVDFDPALNKNIALASGNMGLTAELLGKQHGITREMQDAFGARSHQKAHEAHLAGRWDNEIVATQGHDATGALTLVEHDEVIRPETTAESLSALRPVFDPVNGTVTAGTSSALSDGASAMLVMSAAKAKELGLTPRVKIRGMAVAGCDPATMGFGPVPATKKALKRAGLSIADIELFEFNEAFAAQALSCVRSLKVEDKMDQINLNGGAIALGHPLGCSGSRISGTLINLMEGQDVNIGLATMCIGLGQGIATVFERV.

The active-site Acyl-thioester intermediate is cysteine 91. Catalysis depends on proton acceptor residues histidine 342 and cysteine 372.

It belongs to the thiolase-like superfamily. Thiolase family. As to quaternary structure, heterotetramer of two alpha chains (FadB) and two beta chains (FadA).

It is found in the cytoplasm. It catalyses the reaction an acyl-CoA + acetyl-CoA = a 3-oxoacyl-CoA + CoA. It participates in lipid metabolism; fatty acid beta-oxidation. In terms of biological role, catalyzes the final step of fatty acid oxidation in which acetyl-CoA is released and the CoA ester of a fatty acid two carbons shorter is formed. The protein is 3-ketoacyl-CoA thiolase of Colwellia psychrerythraea (strain 34H / ATCC BAA-681) (Vibrio psychroerythus).